The sequence spans 515 residues: 1-pyrroline-5-carboxylate dehydrogenase (515 aa).

Active-site residues include Glu-286 and Cys-320.

The protein belongs to the aldehyde dehydrogenase family. RocA subfamily.

The catalysed reaction is L-glutamate 5-semialdehyde + NAD(+) + H2O = L-glutamate + NADH + 2 H(+). It functions in the pathway amino-acid degradation; L-proline degradation into L-glutamate; L-glutamate from L-proline: step 2/2. This Bacillus anthracis (strain A0248) protein is 1-pyrroline-5-carboxylate dehydrogenase.